The primary structure comprises 451 residues: Exodeoxyribonuclease 7 large subunit (451 aa).

Belongs to the XseA family. In terms of assembly, heterooligomer composed of large and small subunits.

The protein localises to the cytoplasm. It carries out the reaction Exonucleolytic cleavage in either 5'- to 3'- or 3'- to 5'-direction to yield nucleoside 5'-phosphates.. Functionally, bidirectionally degrades single-stranded DNA into large acid-insoluble oligonucleotides, which are then degraded further into small acid-soluble oligonucleotides. The chain is Exodeoxyribonuclease 7 large subunit from Neisseria meningitidis serogroup C / serotype 2a (strain ATCC 700532 / DSM 15464 / FAM18).